The chain runs to 138 residues: uncharacterized protein (138 aa).

Residues 9–133 (EDEWKKELGP…NSASLEFHNE (125 aa)) form the MsrB domain. Residues C49, C52, C97, and C100 each coordinate Zn(2+). The active-site Nucleophile is C122.

This sequence belongs to the MsrB Met sulfoxide reductase family. It depends on Zn(2+) as a cofactor.

The protein localises to the cytoplasm. It is found in the nucleus. This is an uncharacterized protein from Schizosaccharomyces pombe (strain 972 / ATCC 24843) (Fission yeast).